Here is a 520-residue protein sequence, read N- to C-terminus: Sodium-dependent dicarboxylate transporter SdcS (520 aa).

Helical transmembrane passes span threonine 30–phenylalanine 50, leucine 55–threonine 75, alanine 77–leucine 97, serine 104–methionine 124, serine 160–isoleucine 180, isoleucine 207–isoleucine 227, phenylalanine 242–leucine 262, lysine 298–leucine 318, valine 323–isoleucine 343, glutamate 362–serine 382, glycine 399–valine 419, methionine 428–methionine 448, alanine 452–phenylalanine 472, and leucine 491–isoleucine 511.

This sequence belongs to the SLC13A/DASS transporter (TC 2.A.47) family. NADC subfamily.

The protein resides in the cell membrane. Its function is as follows. Mediates the transport of the dicarboxylates fumarate, malate, and succinate across the cytoplasmic membrane via a Na(+)-electrochemical gradient. This chain is Sodium-dependent dicarboxylate transporter SdcS (sdcS), found in Staphylococcus aureus (strain MRSA252).